The chain runs to 615 residues: Elongation factor 4 (615 aa).

The tr-type G domain maps to 14–200; that stretch reads SRIRNFCIIA…KVVELIPAPS (187 aa). Residues 26-31 and 147-150 each bind GTP; these read DHGKST and NKID.

Belongs to the TRAFAC class translation factor GTPase superfamily. Classic translation factor GTPase family. LepA subfamily.

It localises to the cell membrane. It catalyses the reaction GTP + H2O = GDP + phosphate + H(+). Required for accurate and efficient protein synthesis under certain stress conditions. May act as a fidelity factor of the translation reaction, by catalyzing a one-codon backward translocation of tRNAs on improperly translocated ribosomes. Back-translocation proceeds from a post-translocation (POST) complex to a pre-translocation (PRE) complex, thus giving elongation factor G a second chance to translocate the tRNAs correctly. Binds to ribosomes in a GTP-dependent manner. The polypeptide is Elongation factor 4 (Corynebacterium efficiens (strain DSM 44549 / YS-314 / AJ 12310 / JCM 11189 / NBRC 100395)).